A 229-amino-acid chain; its full sequence is UPF0758 protein Caur_3603 (229 aa).

Residues 105 to 227 (PIRSPADVAT…YVSLRERGLG (123 aa)) form the MPN domain. Zn(2+) is bound by residues His-176, His-178, and Asp-189. Residues 176–189 (HNHPSGEPTPSMED) carry the JAMM motif motif.

It belongs to the UPF0758 family.

The chain is UPF0758 protein Caur_3603 from Chloroflexus aurantiacus (strain ATCC 29366 / DSM 635 / J-10-fl).